The sequence spans 307 residues: uncharacterized protein (307 aa).

Residues 1-25 (MKFQKRNIQLVLILLLILNNCFINS) form the signal peptide. The tract at residues 60 to 90 (ENNNKNNNNNNNNNNNNNNNNKNSKVKNDDS) is disordered. Positions 63–82 (NKNNNNNNNNNNNNNNNNKN) are enriched in low complexity. Asn-124 and Asn-173 each carry an N-linked (GlcNAc...) asparagine glycan. 2 helical membrane-spanning segments follow: residues 244 to 264 (IIFA…YYLA) and 275 to 295 (IIGV…TIVI).

It is found in the membrane. This is an uncharacterized protein from Dictyostelium discoideum (Social amoeba).